The chain runs to 475 residues: Sulfate adenylyltransferase subunit 1 (475 aa).

In terms of domain architecture, tr-type G spans 25–239 (KSLLRFLTCG…EVLETVEIQR (215 aa)). The segment at 34–41 (GSVDDGKS) is G1. 34–41 (GSVDDGKS) provides a ligand contact to GTP. The interval 92 to 96 (GITID) is G2. Residues 113 to 116 (DTPG) form a G3 region. GTP is bound by residues 113–117 (DTPGH) and 168–171 (NKMD). Residues 168–171 (NKMD) form a G4 region. The G5 stretch occupies residues 206–208 (SAL).

It belongs to the TRAFAC class translation factor GTPase superfamily. Classic translation factor GTPase family. CysN/NodQ subfamily. In terms of assembly, heterodimer composed of CysD, the smaller subunit, and CysN.

It carries out the reaction sulfate + ATP + H(+) = adenosine 5'-phosphosulfate + diphosphate. Its pathway is sulfur metabolism; hydrogen sulfide biosynthesis; sulfite from sulfate: step 1/3. Functionally, with CysD forms the ATP sulfurylase (ATPS) that catalyzes the adenylation of sulfate producing adenosine 5'-phosphosulfate (APS) and diphosphate, the first enzymatic step in sulfur assimilation pathway. APS synthesis involves the formation of a high-energy phosphoric-sulfuric acid anhydride bond driven by GTP hydrolysis by CysN coupled to ATP hydrolysis by CysD. The protein is Sulfate adenylyltransferase subunit 1 of Escherichia coli O157:H7.